The primary structure comprises 238 residues: Nicotinamide/nicotinic acid mononucleotide adenylyltransferase (238 aa).

Positions 29 and 30 each coordinate NAD(+). ATP-binding residues include H37 and K70. NAD(+) is bound by residues T107, G136, D138, W149, R168, and N199. 204-205 (SR) contacts ATP.

The protein belongs to the eukaryotic NMN adenylyltransferase family. The cofactor is a divalent metal cation.

It localises to the nucleus. The enzyme catalyses beta-nicotinamide D-ribonucleotide + ATP + H(+) = diphosphate + NAD(+). It carries out the reaction nicotinate beta-D-ribonucleotide + ATP + H(+) = deamido-NAD(+) + diphosphate. It participates in cofactor biosynthesis; NAD(+) biosynthesis; deamido-NAD(+) from nicotinate D-ribonucleotide: step 1/1. Its pathway is cofactor biosynthesis; NAD(+) biosynthesis; NAD(+) from nicotinamide D-ribonucleotide: step 1/1. Catalyzes the formation of NAD(+) from nicotinamide mononucleotide (NMN) and ATP. Can also use the deamidated form; nicotinic acid mononucleotide (NaMN) as substrate. The polypeptide is Nicotinamide/nicotinic acid mononucleotide adenylyltransferase (NMNAT) (Arabidopsis thaliana (Mouse-ear cress)).